The primary structure comprises 224 residues: UPF0173 metal-dependent hydrolase Ta0764 (224 aa).

Belongs to the UPF0173 family.

The protein is UPF0173 metal-dependent hydrolase Ta0764 of Thermoplasma acidophilum (strain ATCC 25905 / DSM 1728 / JCM 9062 / NBRC 15155 / AMRC-C165).